The following is a 345-amino-acid chain: Dihydroorotate dehydrogenase (quinone) (345 aa).

FMN contacts are provided by residues 65 to 69 (AGLDK) and Thr-89. Residue Lys-69 participates in substrate binding. 114–118 (NRMGF) serves as a coordination point for substrate. Residues Asn-142 and Asn-175 each contribute to the FMN site. Substrate is bound at residue Asn-175. Residue Ser-178 is the Nucleophile of the active site. Position 180 (Asn-180) interacts with substrate. FMN-binding residues include Lys-220 and Thr-248. Substrate is bound at residue 249–250 (NT). FMN is bound by residues Gly-271, Gly-300, and 321–322 (YT).

This sequence belongs to the dihydroorotate dehydrogenase family. Type 2 subfamily. Monomer. The cofactor is FMN.

The protein localises to the cell membrane. The catalysed reaction is (S)-dihydroorotate + a quinone = orotate + a quinol. The protein operates within pyrimidine metabolism; UMP biosynthesis via de novo pathway; orotate from (S)-dihydroorotate (quinone route): step 1/1. Its function is as follows. Catalyzes the conversion of dihydroorotate to orotate with quinone as electron acceptor. The chain is Dihydroorotate dehydrogenase (quinone) from Burkholderia multivorans (strain ATCC 17616 / 249).